A 314-amino-acid chain; its full sequence is ATP synthase gamma chain (314 aa).

The protein belongs to the ATPase gamma chain family. As to quaternary structure, F-type ATPases have 2 components, CF(1) - the catalytic core - and CF(0) - the membrane proton channel. CF(1) has five subunits: alpha(3), beta(3), gamma(1), delta(1), epsilon(1). CF(0) has three main subunits: a, b and c.

The protein localises to the cellular thylakoid membrane. Produces ATP from ADP in the presence of a proton gradient across the membrane. The gamma chain is believed to be important in regulating ATPase activity and the flow of protons through the CF(0) complex. This Synechococcus sp. (strain JA-3-3Ab) (Cyanobacteria bacterium Yellowstone A-Prime) protein is ATP synthase gamma chain.